A 379-amino-acid polypeptide reads, in one-letter code: Chaperone protein DnaJ (379 aa).

The 66-residue stretch at C7–G72 folds into the J domain. The CR-type zinc finger occupies G135 to E213. Residues C148, C151, C165, C168, C187, C190, C201, and C204 each contribute to the Zn(2+) site. CXXCXGXG motif repeat units follow at residues C148 to G155, C165 to G172, C187 to G194, and C201 to G208.

Belongs to the DnaJ family. In terms of assembly, homodimer. Zn(2+) serves as cofactor.

Its subcellular location is the cytoplasm. Functionally, participates actively in the response to hyperosmotic and heat shock by preventing the aggregation of stress-denatured proteins and by disaggregating proteins, also in an autonomous, DnaK-independent fashion. Unfolded proteins bind initially to DnaJ; upon interaction with the DnaJ-bound protein, DnaK hydrolyzes its bound ATP, resulting in the formation of a stable complex. GrpE releases ADP from DnaK; ATP binding to DnaK triggers the release of the substrate protein, thus completing the reaction cycle. Several rounds of ATP-dependent interactions between DnaJ, DnaK and GrpE are required for fully efficient folding. Also involved, together with DnaK and GrpE, in the DNA replication of plasmids through activation of initiation proteins. This is Chaperone protein DnaJ from Rhodopseudomonas palustris (strain HaA2).